We begin with the raw amino-acid sequence, 444 residues long: MDSSAQQLWHNLLERLKLLLTRPAFETWFQTATVKEWQNDRLVIQAANPFILNHLQKNYLSTIAEVVQDIVGYPVEIQLTAQQGDLIAIFQPHTSLESELSPTNQLNPKYNFSRFVVGPTNRMAHAAALAVAELPGREFNPLFLCGGVGLGKTHLMQAIGHYRLELYPQSRVFYVSTEQFTNDLITAIRQDSMESFRNHYRHADILLVDDLQFIEGKEYTQEEFFHTFNTLHEAGKQVVLASDRLPKQIPSLQDRLISRFSMGLVADIQAPDIETRMAILQKKAEYENLRLPREVIEYIAVNYTSNIRELEGALIRATTYISISGLPMTVENIAPVLNPPMAKIATSPEIIMAVVAEKFQLSIADLKGNSRRREISFARQIGMYLMRQHTDLSLPRIGEEFGGKDHTTVIYSCDKINLSQHQDRQLQEILAQLIERINSLSRNQ.

Positions 1–73 are domain I, interacts with DnaA modulators; sequence MDSSAQQLWH…AEVVQDIVGY (73 aa). The domain II stretch occupies residues 73–104; sequence YPVEIQLTAQQGDLIAIFQPHTSLESELSPTN. The interval 105–321 is domain III, AAA+ region; sequence QLNPKYNFSR…GALIRATTYI (217 aa). Residues Gly-149, Gly-151, Lys-152, and Thr-153 each coordinate ATP. The segment at 322–444 is domain IV, binds dsDNA; it reads SISGLPMTVE…ERINSLSRNQ (123 aa).

The protein belongs to the DnaA family. In terms of assembly, oligomerizes as a right-handed, spiral filament on DNA at oriC.

The protein resides in the cytoplasm. In terms of biological role, plays an essential role in the initiation and regulation of chromosomal replication. ATP-DnaA binds to the origin of replication (oriC) to initiate formation of the DNA replication initiation complex once per cell cycle. Binds the DnaA box (a 9 base pair repeat at the origin) and separates the double-stranded (ds)DNA. Forms a right-handed helical filament on oriC DNA; dsDNA binds to the exterior of the filament while single-stranded (ss)DNA is stabiized in the filament's interior. The ATP-DnaA-oriC complex binds and stabilizes one strand of the AT-rich DNA unwinding element (DUE), permitting loading of DNA polymerase. After initiation quickly degrades to an ADP-DnaA complex that is not apt for DNA replication. Binds acidic phospholipids. This chain is Chromosomal replication initiator protein DnaA, found in Microcystis aeruginosa (strain NIES-843 / IAM M-2473).